Here is a 189-residue protein sequence, read N- to C-terminus: 5-hmdU DNA kinase (189 aa).

It belongs to the thymidylate kinase family. 5-hmdU DNA kinase subfamily.

It catalyses the reaction 5-hydroxymethyl-dUMP in DNA + ATP = 5-phosphomethyl-dUMP in DNA + ADP + H(+). Functionally, phosphorylates 5-hydroxymethyluracil (5hmdU) into 5-phosphomethyl-2'-deoxyuridine (5- PmdU) on DNA as a step in the pathway leading to thymidine hypermodifications in the viral genome. The phosphate is added internally to the DNA polymer. As a final result of the pathway of hypermodification, 5-AcNmdU substitutes for a subset of thymidines in the viral DNA. These modifications probably prevent degradation of viral genome by the host restriction-modification antiviral defense system. This chain is 5-hmdU DNA kinase, found in Pseudomonas phage PaMx11.